The chain runs to 550 residues: Cochlin (550 aa).

A signal peptide spans methionine 1–serine 24. The LCCL domain maps to alanine 28–phenylalanine 121. 2 disulfides stabilise this stretch: cysteine 34–cysteine 50 and cysteine 54–cysteine 74. Asparagine 100 carries an N-linked (GlcNAc...) asparagine glycan. The span at serine 128–serine 139 shows a compositional bias: polar residues. Residues serine 128–asparagine 159 form a disordered region. VWFA domains lie at aspartate 165–leucine 346 and asparagine 367–valine 537. N-linked (GlcNAc...) asparagine glycosylation occurs at asparagine 221.

In terms of assembly, monomer. May form homodimer. Interacts with type II collagen. Interacts with SLC44A2. Interacts with ANXA2. Post-translationally, N-glycosylated. In terms of processing, a 50 kDa form is created by proteolytic cleavage. In terms of tissue distribution, expressed in inner ear structures; the cochlea and the vestibule.

Its subcellular location is the secreted. It localises to the extracellular space. It is found in the extracellular matrix. Plays a role in the control of cell shape and motility in the trabecular meshwork. This is Cochlin (COCH) from Homo sapiens (Human).